Here is a 191-residue protein sequence, read N- to C-terminus: Reticulon-like protein B15 (191 aa).

The 179-residue stretch at 13–191 (VADLCLWKDK…SKIPRAPKVE (179 aa)) folds into the Reticulon domain. The next 3 membrane-spanning stretches (helical) occupy residues 23–43 (INSG…EFME), 47–67 (VPLL…WAKF), and 122–142 (VAII…YICL).

The protein localises to the endoplasmic reticulum membrane. This chain is Reticulon-like protein B15 (RTNLB15), found in Arabidopsis thaliana (Mouse-ear cress).